The sequence spans 110 residues: Small ribosomal subunit protein eS25 (110 aa).

Residues 1 to 38 form a disordered region; sequence MGGKKKPTLSQLAKKAEKEKAQQAQKAKKEVKKEETPA. Basic and acidic residues predominate over residues 14 to 38; sequence KKAEKEKAQQAQKAKKEVKKEETPA.

The protein belongs to the eukaryotic ribosomal protein eS25 family.

This is Small ribosomal subunit protein eS25 (rps25e) from Pyrobaculum aerophilum (strain ATCC 51768 / DSM 7523 / JCM 9630 / CIP 104966 / NBRC 100827 / IM2).